A 399-amino-acid chain; its full sequence is Serine/threonine transporter SstT (399 aa).

Helical transmembrane passes span 8–28 (LSLV…AFLF), 37–57 (IFGE…VFVL), 77–97 (ILFL…IADL), 134–154 (PVVA…IILG), 178–198 (VIHL…AVTF), 212–232 (LLLV…PIMV), 284–304 (VIIP…ITVL), 312–332 (LGIS…SISA), and 348–370 (VACS…GMVI).

The protein belongs to the dicarboxylate/amino acid:cation symporter (DAACS) (TC 2.A.23) family.

It localises to the cell inner membrane. The catalysed reaction is L-serine(in) + Na(+)(in) = L-serine(out) + Na(+)(out). It catalyses the reaction L-threonine(in) + Na(+)(in) = L-threonine(out) + Na(+)(out). Its function is as follows. Involved in the import of serine and threonine into the cell, with the concomitant import of sodium (symport system). The protein is Serine/threonine transporter SstT of Acinetobacter baylyi (strain ATCC 33305 / BD413 / ADP1).